The following is a 287-amino-acid chain: Glutamate racemase (287 aa).

Substrate-binding positions include 32 to 33 and 64 to 65; these read DS and YG. Residue Cys-96 is the Proton donor/acceptor of the active site. Residue 97–98 participates in substrate binding; the sequence is NT. Residue Cys-208 is the Proton donor/acceptor of the active site. Residue 209–210 coordinates substrate; sequence TH.

Belongs to the aspartate/glutamate racemases family.

It carries out the reaction L-glutamate = D-glutamate. It participates in cell wall biogenesis; peptidoglycan biosynthesis. Provides the (R)-glutamate required for cell wall biosynthesis. The chain is Glutamate racemase from Photorhabdus laumondii subsp. laumondii (strain DSM 15139 / CIP 105565 / TT01) (Photorhabdus luminescens subsp. laumondii).